The following is a 436-amino-acid chain: Eukaryotic translation initiation factor 4B (436 aa).

The disordered stretch occupies residues 56–98 (AKNNSNNTRSGGFGGSFGGRSRLDPALGGGSSDRREEYPVPDA). Phosphoserine is present on residues S65 and S71. The region spanning 101–183 (YRAVINNIPW…RTVYVSVAAP (83 aa)) is the RRM domain. The tract at residues 185-406 (RGGGADVDWS…EKQNGDAKEN (222 aa)) is disordered. Residues 190 to 210 (DVDWSSARGSNFQGDGREDAP) form a 1; approximate repeat. Positions 190–350 (DVDWSSARGS…DWGAARGAQF (161 aa)) are 7 X approximate tandem repeats. Tandem repeats lie at residues 211–232 (DLDW…REEV), 233–258 (DIDW…REEV), 259–284 (DIDW…REEP), 285–310 (DIDW…REEP), and 311–340 (DIDW…EPAL). Positions 329-338 (PRREREKEEP) are enriched in basic and acidic residues. A 7; truncated repeat occupies 341-350 (DWGAARGAQF). 2 stretches are compositionally biased toward basic and acidic residues: residues 359–376 (TYKD…EQPK) and 397–406 (EKQNGDAKEN).

In terms of biological role, involved in translation initiation. May be the homolog of mammalian eIF4B and be part of an RNA helicase. STM1/TIF3 is a non-essential gene. The sequence is that of Eukaryotic translation initiation factor 4B (TIF3) from Saccharomyces cerevisiae (strain ATCC 204508 / S288c) (Baker's yeast).